We begin with the raw amino-acid sequence, 511 residues long: Dihydrolipoyl dehydrogenase, mitochondrial (511 aa).

FAD contacts are provided by residues 75 to 84 (EKRGTLGGTC), K93, G157, and 187 to 189 (TGS). A disulfide bridge connects residues C84 and C89. NAD(+) is bound by residues 224–231 (GGGIIGLE), E247, L281, and G316. Residues D357 and 363–366 (MLAH) each bind FAD. The Proton acceptor role is filled by H489.

It belongs to the class-I pyridine nucleotide-disulfide oxidoreductase family. In terms of assembly, homodimer. FAD serves as cofactor.

It is found in the mitochondrion matrix. The enzyme catalyses N(6)-[(R)-dihydrolipoyl]-L-lysyl-[protein] + NAD(+) = N(6)-[(R)-lipoyl]-L-lysyl-[protein] + NADH + H(+). Its function is as follows. Lipoamide dehydrogenase is a component of the alpha-ketoacid dehydrogenase complexes. Malfunction of this protein blocks the progression of cell cycle from G1 to S phase. The polypeptide is Dihydrolipoyl dehydrogenase, mitochondrial (dld1) (Schizosaccharomyces pombe (strain 972 / ATCC 24843) (Fission yeast)).